We begin with the raw amino-acid sequence, 92 residues long: Large ribosomal subunit protein eL31 (92 aa).

At serine 2 the chain carries N-acetylserine.

It belongs to the eukaryotic ribosomal protein eL31 family. As to quaternary structure, part of the 50S ribosomal subunit.

In terms of biological role, binds to the 23S rRNA. Located at the polypeptide exit tunnel on the outside of the subunit. This is Large ribosomal subunit protein eL31 (rpl31e) from Haloarcula marismortui (strain ATCC 43049 / DSM 3752 / JCM 8966 / VKM B-1809) (Halobacterium marismortui).